The primary structure comprises 210 residues: MENSVENSMDPRSEQEEMQRCADQITDESLESTRRMLQLVEESKDAGIRTLVMLDEQGEQLERIEEGMDQINKDMKEAEKNLSDLGKCCGLCSCPCNKLKNFEAGGAYKKVWGNNQDGVVASQPARVMDDREQMAMSGGYIRRITDDARENEMEENLDQVGSIIGNLRHMALDMSNEIGSQNAQIDRIVVKGDMNKARIDEANKHATKML.

The tract at residues 1–23 (MENSVENSMDPRSEQEEMQRCAD) is disordered. The span at 9–20 (MDPRSEQEEMQR) shows a compositional bias: basic and acidic residues. 2 t-SNARE coiled-coil homology domains span residues 23–85 (DQIT…LSDL) and 147–209 (DARE…ATKM).

The protein belongs to the SNAP-25 family.

The protein localises to the synapse. Its subcellular location is the synaptosome. The protein resides in the cell membrane. In terms of biological role, may play an important role in the synaptic function of specific neuronal systems. Associates with proteins involved in vesicle docking and membrane fusion. The chain is Synaptosomal-associated protein 25 (snap25) from Torpedo marmorata (Marbled electric ray).